Consider the following 812-residue polypeptide: Collagen-like protein 5 (812 aa).

Residues Asn13 and Asn83 are each glycosylated (N-linked (GlcNAc...) asparagine; by host). Collagen-like domains lie at 69 to 128, 143 to 502, and 506 to 565; these read GASG…KGDD, GEKG…KGDN, and GETG…KGEA. The tract at residues 71–568 is disordered; it reads SGAQGVKGDP…PGIKGEAGTN (498 aa). 4 stretches are compositionally biased toward basic and acidic residues: residues 88-112, 121-435, 444-523, and 531-561; these read TKGE…EKGD, SKGD…ETGS, SKGD…KGIK, and VKGD…DPGI. The N-linked (GlcNAc...) asparagine; by host glycan is linked to Asn502. Residues Asn637, Asn658, and Asn667 are each glycosylated (N-linked (GlcNAc...) asparagine; by host). The disordered stretch occupies residues 730-802; that stretch reads GQARTNGAST…VSASGGRGGD (73 aa). Gly residues predominate over residues 752–765; sequence FGGGGGGASGFAKG.

May be hydroxylated on lysine by the viral-encoded procollagen-lysine,2-oxoglutarate 5-dioxygenase.

The protein localises to the virion. In terms of biological role, may participate in the formation of a layer of cross-linked glycosylated fibrils at the viral surface thus giving it a hairy-like appearance. This Acanthamoeba polyphaga (Amoeba) protein is Collagen-like protein 5.